A 429-amino-acid polypeptide reads, in one-letter code: Glutamate-1-semialdehyde 2,1-aminomutase (429 aa).

Lysine 265 carries the post-translational modification N6-(pyridoxal phosphate)lysine.

It belongs to the class-III pyridoxal-phosphate-dependent aminotransferase family. HemL subfamily. In terms of assembly, homodimer. It depends on pyridoxal 5'-phosphate as a cofactor.

The protein localises to the cytoplasm. It carries out the reaction (S)-4-amino-5-oxopentanoate = 5-aminolevulinate. Its pathway is porphyrin-containing compound metabolism; protoporphyrin-IX biosynthesis; 5-aminolevulinate from L-glutamyl-tRNA(Glu): step 2/2. In Alkalilimnicola ehrlichii (strain ATCC BAA-1101 / DSM 17681 / MLHE-1), this protein is Glutamate-1-semialdehyde 2,1-aminomutase.